A 338-amino-acid chain; its full sequence is NADPH dehydrogenase (338 aa).

FMN is bound at residue Ser-22–Cys-25. Residue Tyr-27 coordinates substrate. FMN contacts are provided by Ala-59 and Gln-101. A substrate-binding site is contributed by His-163 to His-166. FMN-binding positions include Arg-214 and Gly-306–Arg-307.

This sequence belongs to the NADH:flavin oxidoreductase/NADH oxidase family. NamA subfamily. As to quaternary structure, homotetramer. The cofactor is FMN.

It catalyses the reaction A + NADPH + H(+) = AH2 + NADP(+). Functionally, catalyzes the reduction of the double bond of an array of alpha,beta-unsaturated aldehydes and ketones. It also reduces the nitro group of nitroester and nitroaromatic compounds. It could have a role in detoxification processes. In Listeria monocytogenes serovar 1/2a (strain ATCC BAA-679 / EGD-e), this protein is NADPH dehydrogenase.